A 190-amino-acid chain; its full sequence is Xanthine phosphoribosyltransferase 2 (190 aa).

Leucine 20 and asparagine 27 together coordinate xanthine. 129–133 (ANGCA) lines the 5-phospho-alpha-D-ribose 1-diphosphate pocket. Lysine 157 is a xanthine binding site.

Belongs to the purine/pyrimidine phosphoribosyltransferase family. Xpt subfamily. In terms of assembly, homodimer.

It localises to the cytoplasm. The enzyme catalyses XMP + diphosphate = xanthine + 5-phospho-alpha-D-ribose 1-diphosphate. It participates in purine metabolism; XMP biosynthesis via salvage pathway; XMP from xanthine: step 1/1. Converts the preformed base xanthine, a product of nucleic acid breakdown, to xanthosine 5'-monophosphate (XMP), so it can be reused for RNA or DNA synthesis. The sequence is that of Xanthine phosphoribosyltransferase 2 from Clostridium botulinum (strain Langeland / NCTC 10281 / Type F).